A 303-amino-acid chain; its full sequence is Probable 5-dehydro-4-deoxyglucarate dehydratase (303 aa).

This sequence belongs to the DapA family.

The enzyme catalyses 5-dehydro-4-deoxy-D-glucarate + H(+) = 2,5-dioxopentanoate + CO2 + H2O. It participates in carbohydrate acid metabolism; D-glucarate degradation; 2,5-dioxopentanoate from D-glucarate: step 2/2. In Leptothrix cholodnii (strain ATCC 51168 / LMG 8142 / SP-6) (Leptothrix discophora (strain SP-6)), this protein is Probable 5-dehydro-4-deoxyglucarate dehydratase.